A 153-amino-acid polypeptide reads, in one-letter code: Prostaglandin E synthase (153 aa).

The Lumenal segment spans residues 1-13; sequence MPSPGLVMESGQV. A helical membrane pass occupies residues 14–42; it reads LPAFLLCSTLLVIKMYAVAVITGQMRLRK. Arg-39 lines the glutathione pocket. The Cytoplasmic segment spans residues 43 to 61; the sequence is KAFANPEDALKRGGLQYYR. The helical transmembrane segment at 62-91 threads the bilayer; the sequence is SDPDVERCLRAHRNDMETIYPFLFLGFVYS. Glutathione is bound at residue 74 to 78; sequence RNDME. At 92 to 96 the chain is on the lumenal side; it reads FLGPN. Residues 97 to 120 traverse the membrane as a helical segment; sequence PLIAWIHFLVVLTGRVVHTVAYLG. 2 residues coordinate glutathione: His-114 and Tyr-118. Residues 121–124 lie on the Cytoplasmic side of the membrane; that stretch reads KLNP. Residues 125-153 form a helical membrane-spanning segment; that stretch reads RLRSGAYVLAQFSCFSMALQILWEVAHHL. 127 to 131 contacts glutathione; that stretch reads RSGAY.

The protein belongs to the MAPEG family. As to quaternary structure, homotrimer. It depends on glutathione as a cofactor.

The protein resides in the membrane. The protein localises to the cytoplasm. It is found in the perinuclear region. It carries out the reaction prostaglandin H2 = prostaglandin E2. It catalyses the reaction 2-glyceryl-prostaglandin H2 = 2-glyceryl-prostaglandin E2. The enzyme catalyses prostaglandin G2 = (15S)-15-hydroperoxy-prostaglandin E2. The catalysed reaction is 1-chloro-2,4-dinitrobenzene + glutathione = 2,4-dinitrophenyl-S-glutathione + chloride + H(+). It carries out the reaction (5S)-hydroperoxy-(6E,8Z,11Z,14Z)-eicosatetraenoate + 2 glutathione = (5S)-hydroxy-(6E,8Z,11Z,14Z)-eicosatetraenoate + glutathione disulfide + H2O. It functions in the pathway lipid metabolism; prostaglandin biosynthesis. With respect to regulation, activity is increased markedly in macrophages and osteoblasts following pro-inflammatory stimuli. In terms of biological role, terminal enzyme of the cyclooxygenase (COX)-2-mediated prostaglandin E2 (PGE2) biosynthetic pathway. Catalyzes the glutathione-dependent oxidoreduction of prostaglandin endoperoxide H2 (PGH2) to prostaglandin E2 (PGE2) in response to inflammatory stimuli. Plays a key role in inflammation response, fever and pain. Also catalyzes the oxidoreduction of endocannabinoids into prostaglandin glycerol esters and PGG2 into 15-hydroperoxy-PGE2. In addition, displays low glutathione transferase and glutathione-dependent peroxidase activities, toward 1-chloro-2,4-dinitrobenzene and 5-hydroperoxyicosatetraenoic acid (5-HPETE), respectively. This Mus musculus (Mouse) protein is Prostaglandin E synthase (Ptges).